Here is a 128-residue protein sequence, read N- to C-terminus: Disintegrin ocellatusin (128 aa).

Positions 1–20 (MIPVLLVTICLAVFPFQGSS) are cleaved as a signal peptide. Positions 21–65 (IILESGNINDYEIVYPKKVAVLPTGAMNSAHPCYDPVTCQPKEKE) are excised as a propeptide. One can recognise a Disintegrin domain in the interval 26–112 (GNINDYEIVY…DCPRNPYKGE (87 aa)). 5 disulfide bridges follow: cysteine 53–cysteine 59, cysteine 67–cysteine 76, cysteine 72–cysteine 97, cysteine 73–cysteine 102, and cysteine 85–cysteine 104. The Cell attachment site motif lies at 89–91 (RGD). Positions 116-128 (MEWPAPAKGSVLM) are excised as a propeptide.

Monomer. As to expression, expressed by the venom gland.

It is found in the secreted. The disintegrin ocellatusin-10c1 is a poor inhibitor of platelet aggregation. The disintegrin inhibits the adhesion of cells expressing the RGD-dependent integrin alpha-5/beta-1 (ITGA5/ITGB1) to immobilized fibronectin. Inhibition on alpha-2b/beta-3 (ITGA2B/ITGB3) is low, and there is no inhibition on alpha-1/beta-1 (ITGA1/ITGB1), alpha-2/beta-1 (ITGA2/ITGB1) and alpha-6/beta-1 (ITGA6/ITGB1). In terms of biological role, the short monomeric disintegrin ocellatusin inhibits ADP-induced platelet aggregation (IC(50)=168 nM). Inhibits alpha-5/beta-1 (ITGA5/ITGB1) integrin and induces the expression of a ligand-induced binding site epitope on beta-1 integrin subunit. Has a direct chemotactic stimulus on human neutrophils in vitro. The chain is Disintegrin ocellatusin from Echis ocellatus (Ocellated saw-scaled viper).